A 225-amino-acid chain; its full sequence is uncharacterized protein (225 aa).

Residues 1–19 are compositionally biased toward polar residues; the sequence is MKFNSISPNKQHHTGFTTS. Residues 1 to 21 are disordered; it reads MKFNSISPNKQHHTGFTTSNN.

This is an uncharacterized protein from Dictyostelium discoideum (Social amoeba).